Reading from the N-terminus, the 1039-residue chain is Serine/threonine-protein kinase Tao (1039 aa).

Residues 27 to 280 (FEDLREIGHG…SAKLLTHAYV (254 aa)) enclose the Protein kinase domain. ATP contacts are provided by residues 33-41 (IGHGSFGAV) and Lys-56. Catalysis depends on Asp-150, which acts as the Proton acceptor. Disordered stretches follow at residues 324–457 (SAVG…NSAS), 485–508 (GGGGTGTGGSGGGSPASGGPLADR), 629–648 (HQQDVERRAKQTSAAEKKLH), and 677–707 (WKRELSMDESTPKRQRDLTLQSQKDNLKQHE). Positions 341–350 (SSKSNSITSE) are enriched in polar residues. A compositionally biased stretch (low complexity) spans 359–376 (SAASSQSSSSNSIPAAAQ). The span at 377–387 (NHHHIAAHHHQ) shows a compositional bias: basic residues. 2 stretches are compositionally biased toward low complexity: residues 388–397 (QAASAAVAAA) and 413–429 (PSGQQGQPVPPGAVSRN). The span at 444 to 454 (HSMNNNVTPTN) shows a compositional bias: polar residues. The segment covering 485–500 (GGGGTGTGGSGGGSPA) has biased composition (gly residues). Coiled-coil stretches lie at residues 631 to 765 (QDVE…MLLK) and 835 to 993 (KQFR…DNES). Basic and acidic residues predominate over residues 677–693 (WKRELSMDESTPKRQRD).

Belongs to the protein kinase superfamily. STE Ser/Thr protein kinase family. STE20 subfamily. As to quaternary structure, interacts with Schip1; the interaction enhances Tao kinase activity. Requires Mg(2+) as cofactor. In terms of processing, autophosphorylated. In terms of tissue distribution, in the posterior midgut, expressed in almost all intestinal cell types including intestinal stem cells and enterocytes (at protein level). Maternally expressed, ubiquitously distributed in the egg and early embryo and enriched in the germ plasm at the posterior pole of the early embryo including the pole cells.

Its subcellular location is the cytoplasm. The protein localises to the cytoskeleton. It localises to the spindle. It is found in the membrane. The protein resides in the perikaryon. Its subcellular location is the cell cortex. The protein localises to the cell projection. It localises to the axon. The enzyme catalyses L-seryl-[protein] + ATP = O-phospho-L-seryl-[protein] + ADP + H(+). It carries out the reaction L-threonyl-[protein] + ATP = O-phospho-L-threonyl-[protein] + ADP + H(+). Functionally, serine/threonine-protein kinase which regulates the Hippo/SWH (Sav/Wts/Hpo) signaling pathway, a signaling pathway that plays a pivotal role in organ size control and tumor suppression by restricting proliferation and promoting apoptosis. The core of this pathway is composed of a kinase cascade wherein Hippo (hpo), in complex with its regulatory protein Salvador (sav), phosphorylates and activates Warts (wts) in complex with its regulatory protein Mats, which in turn phosphorylates and inactivates the Yorkie (yki) oncoprotein. In imaginal cells, phosphorylates and activates hpo and leads to repression of yki. In the midgut, negatively regulates the proliferation of intestinal stem cells through the Hippo/SWH pathway. Independent of the hippo/SWH pathway, regulates epithelial morphogenesis in follicle cells by promoting the endocytosis of Fas2 and reducing lateral adhesion between epithelial cells which, in turn, permits shrinking of the lateral membrane and initiates morphogenesis of the squamous epithelium. Required for the development of both the mushroom body and the ellipsoid body in the brain and may act as a negative regulator of the par-1 kinase. Negatively regulates the JNK pathway which increases sensitivity to ethanol exposure. Plays a role in the control of cell shape by negatively regulating the growth of microtubule plus-ends as they contact the actin-rich cell cortex. Required for the induction of apoptosis in pole cells by promoting expression of skl which enhances activity of the apoptosis activator hid. In terms of biological role, induces in vitro expression of large, highly dynamic, microtubule-dependent lamellopodia-like cytoplasmic expansions which constantly probe the environment. Its function is as follows. Induces in vitro expression of actin-dependent filopodia-like cytoplasmic protrusions which firmly attach to the substrate. Antagonizes the activity of isoform D. This Drosophila melanogaster (Fruit fly) protein is Serine/threonine-protein kinase Tao.